The sequence spans 714 residues: VIN3-like protein 2 (714 aa).

The PHD-type zinc-finger motif lies at 164–232 (RCSCCICRKY…CFYCVSCGKA (69 aa)). A Nuclear localization signal motif is present at residues 239 to 246 (WKKQLTIA). Residues 366–463 (GSTKIRFEDV…INVLTRSAEE (98 aa)) enclose the Fibronectin type-III domain. Residues 478–498 (LTNCSTLSSNPSSVEAESNND) are compositionally biased toward polar residues. Residues 478-530 (LTNCSTLSSNPSSVEAESNNDYIVPKKPSSKNEDNNSPSVDESAAKRMKRTTD) are disordered. The VIN3-Interacting Domain (VID) stretch occupies residues 602-714 (SMKDNCNNGD…PSGFCMKLWH (113 aa)).

Self-interacts. Interacts with VIN3 and VIL1. Component of the plant homeodomain / polycomb repressive complex 2 (PHD-PRC2) large complex during prolonged cold, composed of core PRC2 components (VRN2, EZA1, FIE and MSI1), and three related PHD finger proteins (VIL1, VIL2 and VIN3) that mediates histone H3 trimethylation on 'Lys-27' (H3K27me3).

Its subcellular location is the nucleus. Functionally, maybe involved in both the vernalization and photoperiod pathways by regulating gene expression. Binds preferentially to dimethylated histone H3 'Lys-9' (H3K9me2). Promotes flowering in non-inductive photoperiods (e.g. short days) through the maintenance of the epigenetically repressed state of MAF5 via H3K9me2 and plant homeodomain / polycomb repressive complex 2 (PHD-PRC2)-dependent H3K27me3. This chain is VIN3-like protein 2 (VIL2), found in Arabidopsis thaliana (Mouse-ear cress).